Reading from the N-terminus, the 557-residue chain is Dicarboxylate transporter 1, chloroplastic (557 aa).

Residues 1-69 constitute a chloroplast transit peptide; it reads MASLALSGSC…STLVKASSTV (69 aa). The next 12 helical transmembrane spans lie at 90–110, 122–142, 158–178, 229–249, 256–276, 305–325, 355–375, 376–396, 411–431, 438–458, 477–497, and 531–551; these read AAIK…FVPV, LAIF…LGAV, FAAA…LAFF, AGGI…SNVG, LGSW…SMFL, AAIV…YLIY, IMAA…KLGV, DAVT…VVTW, WFAA…IEWF, FVGG…LLYF, AFLS…LVLA, and YGFL…GAWW.

The protein belongs to the SLC13A/DASS transporter (TC 2.A.47) family. DIT1 subfamily. Expressed in roots, rosette and cauline leaves, stems, flowers and siliques.

Its subcellular location is the plastid. It localises to the chloroplast inner membrane. 2-oxoglutarate/malate translocator involved with DIT2-1 in primary ammonia assimilation and in the re-assimilation of ammonia generated by the photorespiratory pathway. Imports 2-oxoglutarate into plastids as precursor for ammonia assimilation. 2-oxoglutarate is converted to glutamate, the end product of ammonia assimilation, which is exported to the cytosol by DIT2-1. This chain is Dicarboxylate transporter 1, chloroplastic (DIT1), found in Arabidopsis thaliana (Mouse-ear cress).